We begin with the raw amino-acid sequence, 1935 residues long: Rho GTPase-activating protein 21 (1935 aa).

The interval 1-46 (MATRRATVPEQQQQQPSSPGSEISKNKDGQEQSEMVSPTEEEGFCW) is disordered. The PDZ domain maps to 78-163 (HTTVKDEENG…TLELSVMPKD (86 aa)). 5 disordered regions span residues 212-237 (VEVP…TTQP), 339-373 (PPSY…PGSH), 413-456 (QNTT…QERL), 673-718 (TSTS…DSNS), and 862-919 (NSKT…DVFS). Composition is skewed to polar residues over residues 217–237 (SGTS…TTQP), 348–373 (SMFS…PGSH), and 413–429 (QNTT…SSGQ). Low complexity-rich tracts occupy residues 441–451 (PQSVQMRQRSV) and 673–685 (TSTS…PAHT). A compositionally biased stretch (polar residues) spans 708-718 (SPEANAGDSNS). A compositionally biased stretch (basic and acidic residues) spans 863–884 (SKTERSKSCDEGLDDYKDEGKL). Positions 920–1033 (DSNKEGFLYF…WIKAIQENGN (114 aa)) constitute a PH domain. The segment at 1056–1126 (TMMSSSSNKS…KGSWRRIMKK (71 aa)) is disordered. A compositionally biased stretch (low complexity) spans 1059–1072 (SSSSNKSEQSPKPS). Basic and acidic residues predominate over residues 1097 to 1119 (PKQESERRLFSKDDISPPKDKGS). Positions 1140–1332 (VRLDDCPPAH…TLIQQHDWFF (193 aa)) constitute a Rho-GAP domain. Disordered stretches follow at residues 1341 to 1393 (ITAV…GSGK), 1411 to 1431 (RKRK…ELDN), 1488 to 1510 (SEAT…RLPP), 1525 to 1548 (SMSD…KPKV), 1637 to 1665 (HRSK…SITP), 1688 to 1733 (SIRQ…EPEE), and 1838 to 1925 (SELS…SGTQ). Polar residues predominate over residues 1345–1355 (QEESTVESQPV). Over residues 1376–1393 (SDSASDSAKSKGSWGSGK) the composition is skewed to low complexity. 2 stretches are compositionally biased toward polar residues: residues 1525–1543 (SMSD…SAQR) and 1646–1662 (RNVQ…TEGS). Residues 1691–1705 (QKTDSECSAESKNEE) are compositionally biased toward basic and acidic residues. Polar residues-rich tracts occupy residues 1872 to 1889 (QVST…SQGT) and 1898 to 1911 (NGDS…NNFS).

Its subcellular location is the golgi apparatus membrane. The protein localises to the cell junction. It localises to the cytoplasmic vesicle membrane. It is found in the cytoplasm. The protein resides in the cytoskeleton. Functionally, GTPase-activating protein (GAP) for rhoa and cdc42. The polypeptide is Rho GTPase-activating protein 21 (arhgap21) (Xenopus tropicalis (Western clawed frog)).